A 385-amino-acid chain; its full sequence is tRNA pseudouridine synthase D (385 aa).

The active-site Nucleophile is Asp65. One can recognise a TRUD domain in the interval 143–345 (GCENYFGEQR…SDGVRKAFFK (203 aa)).

It belongs to the pseudouridine synthase TruD family.

The enzyme catalyses uridine(13) in tRNA = pseudouridine(13) in tRNA. Responsible for synthesis of pseudouridine from uracil-13 in transfer RNAs. In Aquifex aeolicus (strain VF5), this protein is tRNA pseudouridine synthase D.